We begin with the raw amino-acid sequence, 301 residues long: Ribosomal RNA small subunit methyltransferase H (301 aa).

S-adenosyl-L-methionine contacts are provided by residues 25–27 (GGH), Asp-45, Phe-72, Asp-94, and Gln-101.

Belongs to the methyltransferase superfamily. RsmH family.

Its subcellular location is the cytoplasm. It catalyses the reaction cytidine(1402) in 16S rRNA + S-adenosyl-L-methionine = N(4)-methylcytidine(1402) in 16S rRNA + S-adenosyl-L-homocysteine + H(+). In terms of biological role, specifically methylates the N4 position of cytidine in position 1402 (C1402) of 16S rRNA. This is Ribosomal RNA small subunit methyltransferase H from Methylococcus capsulatus (strain ATCC 33009 / NCIMB 11132 / Bath).